A 107-amino-acid chain; its full sequence is Large ribosomal subunit protein P2-A (107 aa).

The segment at 85-107 (GAAAPAAAAEEEEDDDMGFGLFD) is disordered.

The protein belongs to the eukaryotic ribosomal protein P1/P2 family. In terms of assembly, P1 and P2 exist as dimers at the large ribosomal subunit. Phosphorylated.

In terms of biological role, plays an important role in the elongation step of protein synthesis. The protein is Large ribosomal subunit protein P2-A of Trypanosoma cruzi.